The following is a 355-amino-acid chain: Ornithine transcarbamylase, mitochondrial (355 aa).

Residues 1-35 constitute a mitochondrion transit peptide; the sequence is MLFINLRTLLNNAALRNGHNFVVRNFRCGQPVQDK. An N6-acetyllysine; alternate modification is found at lysine 71. At lysine 71 the chain carries N6-succinyllysine; alternate. N6-succinyllysine is present on lysine 81. Residue lysine 89 is modified to N6-acetyllysine; alternate. At lysine 89 the chain carries N6-succinyllysine; alternate. 91-95 contributes to the carbamoyl phosphate binding site; that stretch reads STRTR. Serine 134 is subject to Phosphoserine. Arginine 142 is a binding site for carbamoyl phosphate. Arginine 142 is a binding site for L-ornithine. N6-acetyllysine; alternate is present on lysine 145. Lysine 145 carries the N6-succinyllysine; alternate modification. Histidine 169 lines the carbamoyl phosphate pocket. L-ornithine is bound at residue asparagine 200. N6-acetyllysine; alternate is present on residues lysine 222, lysine 232, and lysine 239. Lysine 222, lysine 232, and lysine 239 each carry N6-succinyllysine; alternate. Lysine 244 bears the N6-acetyllysine mark. Residue 264-268 coordinates L-ornithine; that stretch reads DTWIS. 2 positions are modified to N6-succinyllysine: lysine 275 and lysine 290. Lysine 293 is subject to N6-acetyllysine; alternate. Position 293 is an N6-succinyllysine; alternate (lysine 293). 303–306 is an L-ornithine binding site; the sequence is HCLP. Cysteine 304 is a catalytic residue. The residue at position 308 (lysine 308) is an N6-acetyllysine; alternate. The residue at position 308 (lysine 308) is an N6-succinyllysine; alternate. Arginine 331 contacts carbamoyl phosphate. Position 331 (arginine 331) interacts with L-ornithine.

It belongs to the aspartate/ornithine carbamoyltransferase superfamily. OTCase family. In terms of assembly, homotrimer. In terms of processing, acetylation at Lys-89 negatively regulates ornithine carbamoyltransferase activity in response to nutrient signals.

The protein resides in the mitochondrion matrix. The catalysed reaction is carbamoyl phosphate + L-ornithine = L-citrulline + phosphate + H(+). It participates in nitrogen metabolism; urea cycle; L-citrulline from L-ornithine and carbamoyl phosphate: step 1/1. Its activity is regulated as follows. Negatively regulated by lysine acetylation. In terms of biological role, catalyzes the second step of the urea cycle, the condensation of carbamoyl phosphate with L-ornithine to form L-citrulline. The urea cycle ensures the detoxification of ammonia by converting it to urea for excretion. This Ovis aries (Sheep) protein is Ornithine transcarbamylase, mitochondrial.